We begin with the raw amino-acid sequence, 252 residues long: Small ribosomal subunit protein uS3 (252 aa).

In terms of domain architecture, KH type-2 spans 39 to 111; the sequence is IRKLINNFAK…DVNLNVLEVK (73 aa). Positions 226–252 are disordered; it reads SQSSNNPNRRPRNFKGGNNNHVNAKKN.

Belongs to the universal ribosomal protein uS3 family. As to quaternary structure, part of the 30S ribosomal subunit. Forms a tight complex with proteins S10 and S14.

Binds the lower part of the 30S subunit head. Binds mRNA in the 70S ribosome, positioning it for translation. The chain is Small ribosomal subunit protein uS3 from Aster yellows witches'-broom phytoplasma (strain AYWB).